Here is a 346-residue protein sequence, read N- to C-terminus: tRNA N6-adenosine threonylcarbamoyltransferase (346 aa).

His-111 and His-115 together coordinate Fe cation. Residues 134–138, Asp-167, Gly-180, Asp-184, and Asn-279 each bind substrate; that span reads LVSGG. Asp-307 serves as a coordination point for Fe cation.

The protein belongs to the KAE1 / TsaD family. The cofactor is Fe(2+).

The protein localises to the cytoplasm. It carries out the reaction L-threonylcarbamoyladenylate + adenosine(37) in tRNA = N(6)-L-threonylcarbamoyladenosine(37) in tRNA + AMP + H(+). Its function is as follows. Required for the formation of a threonylcarbamoyl group on adenosine at position 37 (t(6)A37) in tRNAs that read codons beginning with adenine. Is involved in the transfer of the threonylcarbamoyl moiety of threonylcarbamoyl-AMP (TC-AMP) to the N6 group of A37, together with TsaE and TsaB. TsaD likely plays a direct catalytic role in this reaction. This is tRNA N6-adenosine threonylcarbamoyltransferase from Trichormus variabilis (strain ATCC 29413 / PCC 7937) (Anabaena variabilis).